The chain runs to 28 residues: GVFCGEPCIKASCSIPGCECIAGLCYKN.

Intrachain disulfides connect C4–C18, C8–C20, and C13–C25.

Post-translationally, this is a cyclic peptide. In terms of processing, contains 3 disulfide bonds.

In terms of biological role, probably participates in a plant defense mechanism. This Viola odorata (Sweet violet) protein is Cyclotide vodo I3.